Reading from the N-terminus, the 199-residue chain is N-(5'-phosphoribosyl)anthranilate isomerase (199 aa).

It belongs to the TrpF family.

It carries out the reaction N-(5-phospho-beta-D-ribosyl)anthranilate = 1-(2-carboxyphenylamino)-1-deoxy-D-ribulose 5-phosphate. It functions in the pathway amino-acid biosynthesis; L-tryptophan biosynthesis; L-tryptophan from chorismate: step 3/5. The chain is N-(5'-phosphoribosyl)anthranilate isomerase from Lacticaseibacillus paracasei (strain ATCC 334 / BCRC 17002 / CCUG 31169 / CIP 107868 / KCTC 3260 / NRRL B-441) (Lactobacillus paracasei).